A 741-amino-acid chain; its full sequence is Transcription activator of gluconeogenesis BDBG_05438 (741 aa).

The interval 1 to 70 (MTASTRNGSP…NAKDPLRPRR (70 aa)) is disordered. Residues 25–61 (KSMTTTPANPPETKSQTNGKGSGTAQSSQKPASTSAN) are compositionally biased toward polar residues. Residues 77–105 (CFACQRAHLTCGDERPCQRCIKRGLQDAC) constitute a DNA-binding region (zn(2)-C6 fungal-type). 6 disordered regions span residues 135–163 (QANT…QSVS), 202–239 (SVFH…SVSG), 285–321 (GAGD…NNQS), 401–421 (TNLM…PGLK), 559–590 (GSSL…PHTG), and 655–741 (FHGK…AKRG). A compositionally biased stretch (polar residues) spans 202-226 (SVFHAQSPSSTQNFDLSSNPQTQNL). The span at 227-238 (SSAMSQTASSVS) shows a compositional bias: low complexity. Polar residues-rich tracts occupy residues 291–321 (PSDS…NNQS) and 401–416 (TNLM…SRIS). Over residues 560-572 (SSLSSASSVRGSS) the composition is skewed to low complexity. The span at 573-586 (TFTPRNNNTHNSID) shows a compositional bias: polar residues. Residues 672 to 718 (TGTTTSGDVATTTATGTSTSNGANANTNGNNTNPNDPSTAASSSASS) show a composition bias toward low complexity. Positions 723-732 (RSNHLGKRGG) are enriched in basic residues.

This sequence belongs to the ERT1/acuK family.

It is found in the nucleus. Its function is as follows. Transcription factor which regulates nonfermentable carbon utilization. Activator of gluconeogenetic genes. This Blastomyces gilchristii (strain SLH14081) (Blastomyces dermatitidis) protein is Transcription activator of gluconeogenesis BDBG_05438.